Reading from the N-terminus, the 186-residue chain is Negative modulator of initiation of replication (186 aa).

The interval 93-94 (AV) is interaction with DNA.

The protein belongs to the SeqA family. As to quaternary structure, homodimer. Polymerizes to form helical filaments.

The protein localises to the cytoplasm. In terms of biological role, negative regulator of replication initiation, which contributes to regulation of DNA replication and ensures that replication initiation occurs exactly once per chromosome per cell cycle. Binds to pairs of hemimethylated GATC sequences in the oriC region, thus preventing assembly of replication proteins and re-initiation at newly replicated origins. Repression is relieved when the region becomes fully methylated. This chain is Negative modulator of initiation of replication, found in Shewanella halifaxensis (strain HAW-EB4).